A 180-amino-acid chain; its full sequence is Probable phospholipid hydroperoxide glutathione peroxidase (180 aa).

Residue C54 is part of the active site.

The protein belongs to the glutathione peroxidase family.

The protein localises to the cytoplasm. It carries out the reaction a hydroperoxy polyunsaturated fatty acid + 2 glutathione = a hydroxy polyunsaturated fatty acid + glutathione disulfide + H2O. Functionally, protects cells and enzymes from oxidative damage, by catalyzing the reduction of hydrogen peroxide, lipid peroxides and organic hydroperoxide, by glutathione. The protein is Probable phospholipid hydroperoxide glutathione peroxidase (GPXHA-2) of Helianthus annuus (Common sunflower).